A 439-amino-acid polypeptide reads, in one-letter code: Proline--tRNA ligase (439 aa).

The protein belongs to the class-II aminoacyl-tRNA synthetase family. ProS type 2 subfamily. As to quaternary structure, homodimer.

It localises to the cytoplasm. The enzyme catalyses tRNA(Pro) + L-proline + ATP = L-prolyl-tRNA(Pro) + AMP + diphosphate. Functionally, catalyzes the attachment of proline to tRNA(Pro) in a two-step reaction: proline is first activated by ATP to form Pro-AMP and then transferred to the acceptor end of tRNA(Pro). This Hyphomonas neptunium (strain ATCC 15444) protein is Proline--tRNA ligase.